A 317-amino-acid polypeptide reads, in one-letter code: Transaldolase (317 aa).

Lys-126 functions as the Schiff-base intermediate with substrate in the catalytic mechanism.

Belongs to the transaldolase family. Type 1 subfamily. In terms of assembly, homodimer.

The protein resides in the cytoplasm. The enzyme catalyses D-sedoheptulose 7-phosphate + D-glyceraldehyde 3-phosphate = D-erythrose 4-phosphate + beta-D-fructose 6-phosphate. It participates in carbohydrate degradation; pentose phosphate pathway; D-glyceraldehyde 3-phosphate and beta-D-fructose 6-phosphate from D-ribose 5-phosphate and D-xylulose 5-phosphate (non-oxidative stage): step 2/3. Functionally, transaldolase is important for the balance of metabolites in the pentose-phosphate pathway. The polypeptide is Transaldolase (Burkholderia multivorans (strain ATCC 17616 / 249)).